Consider the following 204-residue polypeptide: Translation initiation factor 2 subunit beta (204 aa).

Positions 146–204 (AIEEGKELEVHIESISKKGDGVARIGKYILYVAGTKAGQNVKVRITRISGQVAFTQKIL) constitute a TRAM domain.

Belongs to the eIF-2-beta/eIF-5 family. As to quaternary structure, heterotrimer composed of an alpha, a beta and a gamma chain.

Functionally, eIF-2 functions in the early steps of protein synthesis by forming a ternary complex with GTP and initiator tRNA. This is Translation initiation factor 2 subunit beta from Methanocorpusculum labreanum (strain ATCC 43576 / DSM 4855 / Z).